A 189-amino-acid chain; its full sequence is Elongation factor P (189 aa).

Lys-34 carries the N6-(3,6-diaminohexanoyl)-5-hydroxylysine modification.

The protein belongs to the elongation factor P family. Post-translationally, may be beta-lysylated on the epsilon-amino group of Lys-34 by the combined action of EpmA and EpmB, and then hydroxylated on the C5 position of the same residue by EpmC (if this protein is present). Lysylation is critical for the stimulatory effect of EF-P on peptide-bond formation. The lysylation moiety may extend toward the peptidyltransferase center and stabilize the terminal 3-CCA end of the tRNA. Hydroxylation of the C5 position on Lys-34 may allow additional potential stabilizing hydrogen-bond interactions with the P-tRNA.

The protein localises to the cytoplasm. Its pathway is protein biosynthesis; polypeptide chain elongation. Functionally, involved in peptide bond synthesis. Alleviates ribosome stalling that occurs when 3 or more consecutive Pro residues or the sequence PPG is present in a protein, possibly by augmenting the peptidyl transferase activity of the ribosome. Modification of Lys-34 is required for alleviation. The sequence is that of Elongation factor P from Halorhodospira halophila (strain DSM 244 / SL1) (Ectothiorhodospira halophila (strain DSM 244 / SL1)).